Reading from the N-terminus, the 166-residue chain is Monothiol glutaredoxin-3 (166 aa).

Positions 56-159 (DSTDFEVFLE…STLDEWTHNK (104 aa)) constitute a Glutaredoxin domain. Cys76 contributes to the [2Fe-2S] cluster binding site.

It belongs to the glutaredoxin family. Monothiol subfamily. Homodimer.

Its subcellular location is the nucleus. Monothiol glutaredoxin involved in the biogenesis of iron-sulfur clusters. Binds one iron-sulfur cluster per dimer. The iron-sulfur cluster is bound between subunits, and is complexed by a bound glutathione and a cysteine residue from each subunit. The chain is Monothiol glutaredoxin-3 (grx3) from Schizosaccharomyces pombe (strain 972 / ATCC 24843) (Fission yeast).